A 310-amino-acid chain; its full sequence is Glutamyl-Q tRNA(Asp) synthetase (310 aa).

Residues 24-28 (RFAPS) and Glu60 each bind L-glutamate. A 'HIGH' region motif is present at residues 27–37 (PSPSGPLHFGS). Zn(2+)-binding residues include Cys116, Cys118, Tyr130, and Cys134. L-glutamate is bound by residues Tyr187 and Arg205. The short motif at 243-247 (KLSKQ) is the 'KMSKS' region element. Lys246 is an ATP binding site.

The protein belongs to the class-I aminoacyl-tRNA synthetase family. GluQ subfamily. It depends on Zn(2+) as a cofactor.

Catalyzes the tRNA-independent activation of glutamate in presence of ATP and the subsequent transfer of glutamate onto a tRNA(Asp). Glutamate is transferred on the 2-amino-5-(4,5-dihydroxy-2-cyclopenten-1-yl) moiety of the queuosine in the wobble position of the QUC anticodon. The protein is Glutamyl-Q tRNA(Asp) synthetase of Photobacterium profundum (strain SS9).